The chain runs to 671 residues: Transcriptional regulator Kaiso (671 aa).

Residues 1–103 (MESRKLISAT…RADLLDELIK (103 aa)) are interaction with NCOR1. The tract at residues 1-136 (MESRKLISAT…SGTEQDGTAE (136 aa)) is self-association. A BTB domain is found at 32–94 (CDVTVIVEDR…IYSSKVVRVR (63 aa)). The segment covering 127–144 (SGTEQDGTAETLPSSSSD) has biased composition (polar residues). Positions 127–161 (SGTEQDGTAETLPSSSSDKSLDMEKSKDEAQDNGA) are disordered. Positions 145 to 156 (KSLDMEKSKDEA) are enriched in basic and acidic residues. Residues Lys-151 and Lys-153 each participate in a glycyl lysine isopeptide (Lys-Gly) (interchain with G-Cter in SUMO2) cross-link. Position 251 is a phosphothreonine (Thr-251). The tract at residues 298–571 (LPNHMSSSVN…FMSSHIKSVH (274 aa)) is interaction with CBFA2T3. Residues 332 to 365 (IIDDDDDIISSSPDSAVSNTSLVPQADNSKSTTL) form a disordered region. Polar residues predominate over residues 347-365 (AVSNTSLVPQADNSKSTTL). Residues Lys-388, Lys-405, Lys-412, and Lys-447 each participate in a glycyl lysine isopeptide (Lys-Gly) (interchain with G-Cter in SUMO2) cross-link. Over residues 451 to 461 (DGGEAKLDNEL) the composition is skewed to basic and acidic residues. The tract at residues 451 to 474 (DGGEAKLDNELPKTSGSEPPNKRM) is disordered. The tract at residues 452 to 671 (GGEAKLDNEL…EFEFIIPESY (220 aa)) is interaction with CTNND1. Residues Lys-463, Lys-472, and Lys-477 each participate in a glycyl lysine isopeptide (Lys-Gly) (interchain with G-Cter in SUMO2) cross-link. The Nuclear localization signal signature appears at 469–478 (PPNKRMKVKH). 3 C2H2-type zinc fingers span residues 492-514 (YICI…FNIH), 520-542 (YQCR…EIHH), and 548-571 (YQCL…KSVH). Residues 512–637 (NIHSWEKKYQ…TSTPPQNKST (126 aa)) form a required for DNA-binding region. Residues Lys-537, Lys-568, Lys-580, Lys-609, and Lys-616 each participate in a glycyl lysine isopeptide (Lys-Gly) (interchain with G-Cter in SUMO2) cross-link.

Interacts with NCOR1. Self-associates. Interacts with CTNND1, and this interaction inhibits binding to both methylated and non-methylated DNA. Interacts with CTNND2. Interacts with KPNA2/RCH1, which may mediate nuclear import of this protein. Interacts with CBFA2T3. Expressed in brain, heart, kidney, liver, lung, neuromuscular junctions, skeletal muscle, spleen and testis.

It localises to the nucleus. In terms of biological role, transcriptional regulator with bimodal DNA-binding specificity. Binds to methylated CpG dinucleotides in the consensus sequence 5'-CGCG-3' and also binds to the non-methylated consensus sequence 5'-CTGCNA-3' also known as the consensus kaiso binding site (KBS). May recruit the N-CoR repressor complex to promote histone deacetylation and the formation of repressive chromatin structures in target gene promoters. Contributes to the repression of target genes of the Wnt signaling pathway. May also activate transcription of a subset of target genes by the recruitment of CTNND2. Represses expression of MMP7 in conjunction with transcriptional corepressors CBFA2T3, CBFA2T2 and RUNX1T1. In Mus musculus (Mouse), this protein is Transcriptional regulator Kaiso (Zbtb33).